The sequence spans 126 residues: Glycine cleavage system H protein (126 aa).

Residues 22–104 (VATVGITEYA…YEKAWMVKIE (83 aa)) form the Lipoyl-binding domain. Lys-63 carries the N6-lipoyllysine modification.

It belongs to the GcvH family. As to quaternary structure, the glycine cleavage system is composed of four proteins: P, T, L and H. Requires (R)-lipoate as cofactor.

Its function is as follows. The glycine cleavage system catalyzes the degradation of glycine. The H protein shuttles the methylamine group of glycine from the P protein to the T protein. In terms of biological role, is also involved in protein lipoylation via its role as an octanoyl/lipoyl carrier protein intermediate. This Staphylococcus epidermidis (strain ATCC 12228 / FDA PCI 1200) protein is Glycine cleavage system H protein.